The sequence spans 159 residues: ATP synthase subunit b (159 aa).

The chain crosses the membrane as a helical span at residues Val-4–Leu-24.

This sequence belongs to the ATPase B chain family. F-type ATPases have 2 components, F(1) - the catalytic core - and F(0) - the membrane proton channel. F(1) has five subunits: alpha(3), beta(3), gamma(1), delta(1), epsilon(1). F(0) has three main subunits: a(1), b(2) and c(10-14). The alpha and beta chains form an alternating ring which encloses part of the gamma chain. F(1) is attached to F(0) by a central stalk formed by the gamma and epsilon chains, while a peripheral stalk is formed by the delta and b chains.

The protein resides in the cell inner membrane. Its function is as follows. F(1)F(0) ATP synthase produces ATP from ADP in the presence of a proton or sodium gradient. F-type ATPases consist of two structural domains, F(1) containing the extramembraneous catalytic core and F(0) containing the membrane proton channel, linked together by a central stalk and a peripheral stalk. During catalysis, ATP synthesis in the catalytic domain of F(1) is coupled via a rotary mechanism of the central stalk subunits to proton translocation. Functionally, component of the F(0) channel, it forms part of the peripheral stalk, linking F(1) to F(0). This is ATP synthase subunit b from Acidithiobacillus ferrooxidans (strain ATCC 23270 / DSM 14882 / CIP 104768 / NCIMB 8455) (Ferrobacillus ferrooxidans (strain ATCC 23270)).